The sequence spans 245 residues: NAD(P)H-quinone oxidoreductase subunit K (245 aa).

Residues cysteine 58, cysteine 59, cysteine 123, and cysteine 154 each coordinate [4Fe-4S] cluster.

This sequence belongs to the complex I 20 kDa subunit family. In terms of assembly, NDH-1 can be composed of about 15 different subunits; different subcomplexes with different compositions have been identified which probably have different functions. Requires [4Fe-4S] cluster as cofactor.

It localises to the cellular thylakoid membrane. The catalysed reaction is a plastoquinone + NADH + (n+1) H(+)(in) = a plastoquinol + NAD(+) + n H(+)(out). It carries out the reaction a plastoquinone + NADPH + (n+1) H(+)(in) = a plastoquinol + NADP(+) + n H(+)(out). Functionally, NDH-1 shuttles electrons from an unknown electron donor, via FMN and iron-sulfur (Fe-S) centers, to quinones in the respiratory and/or the photosynthetic chain. The immediate electron acceptor for the enzyme in this species is believed to be plastoquinone. Couples the redox reaction to proton translocation, and thus conserves the redox energy in a proton gradient. Cyanobacterial NDH-1 also plays a role in inorganic carbon-concentration. This is NAD(P)H-quinone oxidoreductase subunit K from Trichormus variabilis (strain ATCC 29413 / PCC 7937) (Anabaena variabilis).